Consider the following 317-residue polypeptide: U5 small nuclear ribonucleoprotein TSSC4 (317 aa).

A compositionally biased stretch (acidic residues) spans Met-1–Leu-19. A disordered region spans residues Met-1–Val-74. Residues Pro-20–Ser-37 are compositionally biased toward low complexity. Ser-57, Ser-64, Ser-83, and Ser-92 each carry phosphoserine. The segment at Val-74–Ala-101 is hom2; mediates interaction with the U5 snRNP complexes and required for spliceosomal tri-snRNP complex assembly. The tract at residues Ala-101–Tyr-152 is disordered. Residues Ala-108–Gly-117 show a composition bias toward polar residues. A Phosphothreonine modification is found at Thr-124. Positions Val-146–Arg-300 are interaction with SNRNP200. Residues Leu-147 to Leu-183 are hom3; mediates interaction with the U5 snRNP complexes. Residues Phe-198–Gly-238 form a hom4; necessary for interaction with the PRPF19 complex and required for spliceosomal tri-snRNP complex assembly region. An N6-acetyllysine modification is found at Lys-214. Residues Val-216 to Val-317 are disordered. The segment covering Glu-240–Gly-250 has biased composition (low complexity).

This sequence belongs to the TSSC4 family. In terms of assembly, interacts in a RNA-independent manner with distinct U5 snRNP-containing complexes, the mono-U5 snRNP and the post-splicing U5 snRNP-PRPF19 complex. Interacts with SNRNP200; the interaction is direct, excludes recruitment of C9ORF78 and WBP4 to SNRNP200 and negatively regulates its RNA helicase activity. Interacts with PRPF8; the interaction is direct. Expressed in placenta. Widely expressed in embryo and newborn.

Its subcellular location is the nucleus. The protein localises to the cytoplasm. Its function is as follows. Protein associated with the U5 snRNP, during its maturation and its post-splicing recycling and which is required for spliceosomal tri-snRNP complex assembly in the nucleus. Has a molecular sequestering activity and transiently hinders SNRNP200 binding sites for constitutive splicing factors that intervene later during the assembly of the spliceosome and splicing. Together with its molecular sequestering activity, may also function as a molecular adapter and placeholder, coordinating the assembly of the U5 snRNP and its association with the U4/U6 di-snRNP. The polypeptide is U5 small nuclear ribonucleoprotein TSSC4 (Mus musculus (Mouse)).